The primary structure comprises 71 residues: Phosphatidylinositol N-acetylglucosaminyltransferase subunit Y (71 aa).

The Cytoplasmic portion of the chain corresponds to Met-1 to Leu-3. A helical membrane pass occupies residues Ser-4–Val-26. Over Glu-27–Ser-44 the chain is Lumenal. A helical transmembrane segment spans residues Leu-45–Ile-65. The Cytoplasmic segment spans residues Lys-66–Asn-71.

Component of the glycosylphosphatidylinositol-N-acetylglucosaminyltransferase (GPI-GnT) complex composed at least by PIGA, PIGC, PIGH, PIGP, PIGQ, PIGY and DPM2. Interacts directly with PIGA; this interaction regulates glycosylphosphatidylinositol-N-acetylglucosaminyltransferase activity. Does not interact with Ras proteins.

It localises to the endoplasmic reticulum membrane. It functions in the pathway glycolipid biosynthesis; glycosylphosphatidylinositol-anchor biosynthesis. Functionally, part of the glycosylphosphatidylinositol-N-acetylglucosaminyltransferase (GPI-GnT) complex that catalyzes the transfer of N-acetylglucosamine from UDP-N-acetylglucosamine to phosphatidylinositol and participates in the first step of GPI biosynthesis. May act by regulating the catalytic subunit PIGA. The sequence is that of Phosphatidylinositol N-acetylglucosaminyltransferase subunit Y from Bos taurus (Bovine).